The primary structure comprises 675 residues: Methionine--tRNA ligase (675 aa).

A 'HIGH' region motif is present at residues 15–25 (PYANGSIHLGH). The Zn(2+) site is built by Cys146, Cys149, Cys159, and Cys162. The short motif at 332 to 336 (KMSKS) is the 'KMSKS' region element. Lys335 provides a ligand contact to ATP. The region spanning 573–675 (DFAKVDMRIA…SGAQPGMQVK (103 aa)) is the tRNA-binding domain.

This sequence belongs to the class-I aminoacyl-tRNA synthetase family. MetG type 1 subfamily. As to quaternary structure, homodimer. Requires Zn(2+) as cofactor.

Its subcellular location is the cytoplasm. The catalysed reaction is tRNA(Met) + L-methionine + ATP = L-methionyl-tRNA(Met) + AMP + diphosphate. Its function is as follows. Is required not only for elongation of protein synthesis but also for the initiation of all mRNA translation through initiator tRNA(fMet) aminoacylation. This Yersinia pseudotuberculosis serotype I (strain IP32953) protein is Methionine--tRNA ligase.